Consider the following 496-residue polypeptide: UDP-N-acetylmuramoyl-L-alanyl-D-glutamate--2,6-diaminopimelate ligase (496 aa).

Leucine 29 and serine 31 together coordinate UDP-N-acetyl-alpha-D-muramoyl-L-alanyl-D-glutamate. 118–124 lines the ATP pocket; sequence GTNGKTT. Residues asparagine 159, 160–161, serine 187, glutamine 193, and arginine 195 each bind UDP-N-acetyl-alpha-D-muramoyl-L-alanyl-D-glutamate; that span reads TT. Lysine 227 is subject to N6-carboxylysine. Meso-2,6-diaminopimelate is bound by residues arginine 392, 416–419, glycine 467, and glutamate 471; that span reads DNPR. The Meso-diaminopimelate recognition motif signature appears at 416–419; it reads DNPR.

It belongs to the MurCDEF family. MurE subfamily. Requires Mg(2+) as cofactor. In terms of processing, carboxylation is probably crucial for Mg(2+) binding and, consequently, for the gamma-phosphate positioning of ATP.

The protein localises to the cytoplasm. It catalyses the reaction UDP-N-acetyl-alpha-D-muramoyl-L-alanyl-D-glutamate + meso-2,6-diaminopimelate + ATP = UDP-N-acetyl-alpha-D-muramoyl-L-alanyl-gamma-D-glutamyl-meso-2,6-diaminopimelate + ADP + phosphate + H(+). It functions in the pathway cell wall biogenesis; peptidoglycan biosynthesis. Functionally, catalyzes the addition of meso-diaminopimelic acid to the nucleotide precursor UDP-N-acetylmuramoyl-L-alanyl-D-glutamate (UMAG) in the biosynthesis of bacterial cell-wall peptidoglycan. This is UDP-N-acetylmuramoyl-L-alanyl-D-glutamate--2,6-diaminopimelate ligase from Wigglesworthia glossinidia brevipalpis.